A 770-amino-acid chain; its full sequence is Transferrin receptor protein 1 (770 aa).

Over 1-70 (MMDQARSAFS…KPKRCNGFIC (70 aa)) the chain is Cytoplasmic. The mediates interaction with SH3BP4 stretch occupies residues 1 to 70 (MMDQARSAFS…KPKRCNGFIC (70 aa)). Ser10 and Ser19 each carry phosphoserine. At Tyr20 the chain carries Phosphotyrosine. An Endocytosis signal motif is present at residues 20-23 (YTRF). Thr21 bears the Phosphothreonine mark. Phosphoserine is present on Ser24. The short motif at 61-64 (KPKR) is the Stop-transfer sequence element. S-palmitoyl cysteine attachment occurs at residues Cys65 and Cys70. The chain crosses the membrane as a helical; Signal-anchor for type II membrane protein span at residues 71–90 (YGTIAVVLFFLIGFMIGYLG). Residues 91 to 770 (YCKRVEPKAG…GDIWDIDNEF (680 aa)) lie on the Extracellular side of the membrane. The interval 102-122 (ERPTGTEALGTERTEPSETEE) is disordered. The O-linked (GalNAc...) threonine glycan is linked to Thr107. Residues 233-323 (SKATTVTGRL…GTGDPYTPGF (91 aa)) enclose the PA domain. Residues Asn261, Asn327, and Asn384 are each glycosylated (N-linked (GlcNAc...) asparagine). Residues 579–770 (TMDLYENLNQ…GDIWDIDNEF (192 aa)) form a ligand-binding region. The Cell attachment site motif lies at 656–658 (RGD). Residues Asn732 and Asn737 are each glycosylated (N-linked (GlcNAc...) asparagine).

The protein belongs to the peptidase M28 family. M28B subfamily. In terms of assembly, homodimer; disulfide-linked. Binds one transferrin molecule per subunit. Interacts with SH3BP4. Interacts with STEAP3; facilitates TFRC endocytosis in erythroid precursor cells. Post-translationally, stearoylated by ZDHHC6 which inhibits TFRC-mediated activation of the JNK pathway and promotes mitochondrial fragmentation. Stearoylation does not affect iron uptake. In terms of processing, N- and O-glycosylated, phosphorylated and palmitoylated.

It localises to the cell membrane. The protein localises to the melanosome. Cellular uptake of iron occurs via receptor-mediated endocytosis of ligand-occupied transferrin receptor into specialized endosomes. Endosomal acidification leads to iron release. The apotransferrin-receptor complex is then recycled to the cell surface with a return to neutral pH and the concomitant loss of affinity of apotransferrin for its receptor. Transferrin receptor is necessary for development of erythrocytes and the nervous system. Positively regulates T and B cell proliferation through iron uptake. Acts as a lipid sensor that regulates mitochondrial fusion by regulating activation of the JNK pathway. When dietary levels of stearate (C18:0) are low, promotes activation of the JNK pathway, resulting in HUWE1-mediated ubiquitination and subsequent degradation of the mitofusin MFN2 and inhibition of mitochondrial fusion. When dietary levels of stearate (C18:0) are high, TFRC stearoylation inhibits activation of the JNK pathway and thus degradation of the mitofusin MFN2. Mediates uptake of NICOL1 into fibroblasts where it may regulate extracellular matrix production. This Canis lupus familiaris (Dog) protein is Transferrin receptor protein 1 (TFRC).